Consider the following 159-residue polypeptide: MDPLTHFDEKGGARMVDVSLKGDTRREAVARGRVLMHRDTFRRVRDGQIAKGDVLAVARLAGIMAAKRTSDLIPLCHPLSLTGVDLHFTLDELHSTVEIESRVKTTGKTGVEMEALTAVSVAALTIYDMCKAMDKNMVVSDIRLVEKTGGKSGHYIREE.

Substrate contacts are provided by residues 75-77 and 113-114; these read LCH and ME. Residue Asp-128 is part of the active site.

Belongs to the MoaC family. Homohexamer; trimer of dimers.

The enzyme catalyses (8S)-3',8-cyclo-7,8-dihydroguanosine 5'-triphosphate = cyclic pyranopterin phosphate + diphosphate. Its pathway is cofactor biosynthesis; molybdopterin biosynthesis. Catalyzes the conversion of (8S)-3',8-cyclo-7,8-dihydroguanosine 5'-triphosphate to cyclic pyranopterin monophosphate (cPMP). The polypeptide is Cyclic pyranopterin monophosphate synthase (Heliobacterium modesticaldum (strain ATCC 51547 / Ice1)).